The chain runs to 396 residues: MIISAASDYRAAAQRILPPFLFHYMDGGAYSEYTLRRNVEDLSEVALRQRILKNMSDLSLETTLFNEKLSMPVALAPVGLCGMYARRGEVQAAKAADAHGIPFTLSTVSVCPIEEVAPAIKRPMWFQLYVLRDRGFMRNALERAKAAGCSTLVFTVDMPTPGARYRDAHSGMSGPNAAMRRYLQAVTHPQWAWDVGLNGRPHDLGNISAYLGKPTGLEDYIGWLGNNFDPSISWKDLEWIRDFWDGPMVIKGILDPEDARDAVRFGADGIVVSNHGGRQLDGVLSSARALPAIADAVKGDIAILADSGIRNGLDVVRMIALGADTVLLGRAFLYALATAGQAGVANLLNLIEKEMKVAMTLTGAKSINEITQDSLVQGLGKELPAALAPMAKGNAA.

The FMN hydroxy acid dehydrogenase domain occupies 1–380 (MIISAASDYR…TQDSLVQGLG (380 aa)). Tyr24 is a binding site for substrate. FMN is bound by residues Ser106 and Gln127. Tyr129 lines the substrate pocket. Position 155 (Thr155) interacts with FMN. A substrate-binding site is contributed by Arg164. Lys251 is a binding site for FMN. His275 acts as the Proton acceptor in catalysis. Arg278 contacts substrate. Residue 306 to 330 (DSGIRNGLDVVRMIALGADTVLLGR) participates in FMN binding.

Belongs to the FMN-dependent alpha-hydroxy acid dehydrogenase family. Requires FMN as cofactor.

It localises to the cell inner membrane. The catalysed reaction is (S)-lactate + A = pyruvate + AH2. Functionally, catalyzes the conversion of L-lactate to pyruvate. Is coupled to the respiratory chain. The polypeptide is L-lactate dehydrogenase (Shigella dysenteriae serotype 1 (strain Sd197)).